Reading from the N-terminus, the 132-residue chain is Small ribosomal subunit protein uS8 (132 aa).

Belongs to the universal ribosomal protein uS8 family. As to quaternary structure, part of the 30S ribosomal subunit. Contacts proteins S5 and S12.

Its function is as follows. One of the primary rRNA binding proteins, it binds directly to 16S rRNA central domain where it helps coordinate assembly of the platform of the 30S subunit. In Caldicellulosiruptor bescii (strain ATCC BAA-1888 / DSM 6725 / KCTC 15123 / Z-1320) (Anaerocellum thermophilum), this protein is Small ribosomal subunit protein uS8.